The primary structure comprises 375 residues: Anhydro-N-acetylmuramic acid kinase (375 aa).

ATP is bound at residue 18 to 25 (GTSMDGID).

It belongs to the anhydro-N-acetylmuramic acid kinase family.

The catalysed reaction is 1,6-anhydro-N-acetyl-beta-muramate + ATP + H2O = N-acetyl-D-muramate 6-phosphate + ADP + H(+). Its pathway is amino-sugar metabolism; 1,6-anhydro-N-acetylmuramate degradation. It participates in cell wall biogenesis; peptidoglycan recycling. Functionally, catalyzes the specific phosphorylation of 1,6-anhydro-N-acetylmuramic acid (anhMurNAc) with the simultaneous cleavage of the 1,6-anhydro ring, generating MurNAc-6-P. Is required for the utilization of anhMurNAc either imported from the medium or derived from its own cell wall murein, and thus plays a role in cell wall recycling. The protein is Anhydro-N-acetylmuramic acid kinase of Rhodospirillum rubrum (strain ATCC 11170 / ATH 1.1.1 / DSM 467 / LMG 4362 / NCIMB 8255 / S1).